A 324-amino-acid polypeptide reads, in one-letter code: D-alanine--D-alanine ligase (324 aa).

The ATP-grasp domain maps to 112-312 (KAVLAAAGVT…FDQLVLWIVE (201 aa)). ATP is bound at residue 139–193 (LQPPYVVKPNAEGSSVGVFIIKEGANRPPEEVGAPSWTFGEEVMVEPYIQGMELA). Mg(2+) contacts are provided by Asp-265, Glu-279, and Asn-281.

The protein belongs to the D-alanine--D-alanine ligase family. It depends on Mg(2+) as a cofactor. Requires Mn(2+) as cofactor.

It localises to the cytoplasm. The enzyme catalyses 2 D-alanine + ATP = D-alanyl-D-alanine + ADP + phosphate + H(+). Its pathway is cell wall biogenesis; peptidoglycan biosynthesis. Cell wall formation. In Caulobacter vibrioides (strain ATCC 19089 / CIP 103742 / CB 15) (Caulobacter crescentus), this protein is D-alanine--D-alanine ligase.